The chain runs to 124 residues: Apolipoprotein C-IV (124 aa).

Residues 1–27 (MSLLRCRQQTLPSLCLSVLFLACFVAS) form the signal peptide.

It belongs to the apolipoprotein C4 family.

It is found in the secreted. In terms of biological role, may participate in lipoprotein metabolism. The chain is Apolipoprotein C-IV (Apoc4) from Rattus norvegicus (Rat).